The chain runs to 142 residues: MDIREILKVLPHRYPFLLVDRVLEADERRFKALKNVTFNEPHFQGHFPGHPVMPGVLILEAMAQAAVGALVRQPGFPQGGLAFLAGVEGARFRRPVYPGDTLILEGELLAFRRGVGKVAVRALVEGEERASATLTFVLQGAS.

His-46 is an active-site residue.

This sequence belongs to the thioester dehydratase family. FabZ subfamily.

The protein localises to the cytoplasm. It carries out the reaction a (3R)-hydroxyacyl-[ACP] = a (2E)-enoyl-[ACP] + H2O. Involved in unsaturated fatty acids biosynthesis. Catalyzes the dehydration of short chain beta-hydroxyacyl-ACPs and long chain saturated and unsaturated beta-hydroxyacyl-ACPs. The protein is 3-hydroxyacyl-[acyl-carrier-protein] dehydratase FabZ of Thermus thermophilus (strain ATCC BAA-163 / DSM 7039 / HB27).